Consider the following 349-residue polypeptide: Phosphoribosylformylglycinamidine cyclo-ligase (349 aa).

Belongs to the AIR synthase family.

It localises to the cytoplasm. It carries out the reaction 2-formamido-N(1)-(5-O-phospho-beta-D-ribosyl)acetamidine + ATP = 5-amino-1-(5-phospho-beta-D-ribosyl)imidazole + ADP + phosphate + H(+). The protein operates within purine metabolism; IMP biosynthesis via de novo pathway; 5-amino-1-(5-phospho-D-ribosyl)imidazole from N(2)-formyl-N(1)-(5-phospho-D-ribosyl)glycinamide: step 2/2. In Listeria monocytogenes serotype 4b (strain CLIP80459), this protein is Phosphoribosylformylglycinamidine cyclo-ligase.